A 376-amino-acid polypeptide reads, in one-letter code: UPF0754 membrane protein BH1148 (376 aa).

A run of 2 helical transmembrane segments spans residues 3 to 23 and 355 to 375; these read LILF…SLAI and YLGA…ILLI.

It belongs to the UPF0754 family.

The protein resides in the cell membrane. The polypeptide is UPF0754 membrane protein BH1148 (Halalkalibacterium halodurans (strain ATCC BAA-125 / DSM 18197 / FERM 7344 / JCM 9153 / C-125) (Bacillus halodurans)).